The chain runs to 476 residues: MGIKFLEVIKPFCAVLPEIQKPERKIQFREKVLWTAITLFIFLVCCQIPLFGIMSSDSADPFYWMRVILASNRGTLMELGISPIVTSGLIMQLLAGAKIIGVGDTPKDRALFNGAQKLFGMIITIGQAIVYVMTGMYGDPSEMGAGICLLIIIQLFVAGLIVLLLDELLQKGYGLGSGISLFIATNICETIVWKAFSPTTVNTGRGTEFEGAIIALFHLLATRTDKVRALREGFYRQNLPNLMNLIATVFVFAVVIYFQGFRVDLPIKSARYRGQYNTYPIKLFYTSNIPIILQSALVSNLYVISQMLSTRFSGNFLVNLLGTWSDATSGGPARAYPVAGLCYYLSPPESFGSVLDDPVHAGIYIVFMLGSCAFFSKTWIEVSGSSAKDVAKQLKEQQMVMRGHRETSMVHELNRYIPTAAAFGGLCIGGLSVMADFLGAIGSGTGILLAVTIIYQYFEIFVKEQSEVGSMGALLF.

Residues 2-33 (GIKFLEVIKPFCAVLPEIQKPERKIQFREKVL) lie on the Cytoplasmic side of the membrane. A helical transmembrane segment spans residues 34–53 (WTAITLFIFLVCCQIPLFGI). Over 54–76 (MSSDSADPFYWMRVILASNRGTL) the chain is Lumenal. A helical membrane pass occupies residues 77-96 (MELGISPIVTSGLIMQLLAG). The Cytoplasmic portion of the chain corresponds to 97 to 117 (AKIIGVGDTPKDRALFNGAQK). A helical membrane pass occupies residues 118 to 138 (LFGMIITIGQAIVYVMTGMYG). Over 139–144 (DPSEMG) the chain is Lumenal. The helical transmembrane segment at 145–165 (AGICLLIIIQLFVAGLIVLLL) threads the bilayer. At 166–172 (DELLQKG) the chain is on the cytoplasmic side. Residues 173 to 193 (YGLGSGISLFIATNICETIVW) form a helical membrane-spanning segment. The Lumenal portion of the chain corresponds to 194 to 240 (KAFSPTTVNTGRGTEFEGAIIALFHLLATRTDKVRALREGFYRQNLP). A helical membrane pass occupies residues 241–261 (NLMNLIATVFVFAVVIYFQGF). Residues 262 to 288 (RVDLPIKSARYRGQYNTYPIKLFYTSN) are Cytoplasmic-facing. The chain crosses the membrane as a helical span at residues 289–309 (IPIILQSALVSNLYVISQMLS). Residues 310 to 354 (TRFSGNFLVNLLGTWSDATSGGPARAYPVAGLCYYLSPPESFGSV) lie on the Lumenal side of the membrane. A helical membrane pass occupies residues 355-375 (LDDPVHAGIYIVFMLGSCAFF). At 376–420 (SKTWIEVSGSSAKDVAKQLKEQQMVMRGHRETSMVHELNRYIPTA) the chain is on the cytoplasmic side. The chain crosses the membrane as a helical span at residues 421–441 (AAFGGLCIGGLSVMADFLGAI). Topologically, residues 442 to 445 (GSGT) are lumenal. A helical transmembrane segment spans residues 446–462 (GILLAVTIIYQYFEIFV). Topologically, residues 463 to 476 (KEQSEVGSMGALLF) are cytoplasmic.

It belongs to the SecY/SEC61-alpha family. As to quaternary structure, the SEC61 channel-forming translocon complex consists of channel-forming core components SEC61A1, SEC61B and SEC61G and different auxiliary components such as SEC62 and SEC63. The SEC61 channel associates with the multi-pass translocon (MPT) complex.

It is found in the endoplasmic reticulum membrane. In terms of biological role, component of SEC61 channel-forming translocon complex that mediates transport of signal peptide-containing precursor polypeptides across the endoplasmic reticulum (ER). Forms a ribosome receptor and a gated pore in the ER membrane, both functions required for cotranslational translocation of nascent polypeptides. May cooperate with auxiliary protein SEC62, SEC63 and HSPA5/BiP to enable post-translational transport of small presecretory proteins. The SEC61 channel is also involved in ER membrane insertion of transmembrane proteins: it mediates membrane insertion of the first few transmembrane segments of proteins, while insertion of subsequent transmembrane regions of multi-pass membrane proteins is mediated by the multi-pass translocon (MPT) complex. This chain is Protein transport protein Sec61 subunit alpha (sec61a), found in Hemitripterus americanus (Sea raven).